The sequence spans 249 residues: DNA repair protein RecO (249 aa).

The protein belongs to the RecO family.

In terms of biological role, involved in DNA repair and RecF pathway recombination. In Lawsonia intracellularis (strain PHE/MN1-00), this protein is DNA repair protein RecO.